Reading from the N-terminus, the 214-residue chain is Calcineurin B homologous protein 3 (214 aa).

A lipid anchor (N-myristoyl glycine) is attached at Gly-2. The EF-hand domain occupies 110–145 (CRTDKLRFLFNMYDSDNDNKITLEEYRKVVEELLSG). Ca(2+) is bound by residues Asp-123, Asp-125, Asp-127, Lys-129, and Glu-134.

It belongs to the calcineurin regulatory subunit family. CHP subfamily. As to quaternary structure, monomer. Homodimer.

It localises to the nucleus. It is found in the cytoplasm. The protein localises to the membrane. Its subcellular location is the cell membrane. The protein resides in the cell projection. It localises to the lamellipodium. It is found in the ruffle membrane. In terms of biological role, functions as an integral cofactor in cell pH regulation by controlling plasma membrane-type Na(+)/H(+) exchange activity. Promotes the induction of hematopoietic stem cell differentiation toward megakaryocytic lineage. Essential for the coupling of ERK cascade activation with the expression of ETS family genes in megakaryocytic differentiation. Also involved in granulocytic differentiation in a ERK-dependent manner. Inhibits the phosphatase activity of calcineurin. The protein is Calcineurin B homologous protein 3 of Xenopus laevis (African clawed frog).